The following is a 359-amino-acid chain: Molybdenum import ATP-binding protein ModC (359 aa).

The ABC transporter domain occupies 1 to 236 (MNTEIKARFR…IDLPAAFADD (236 aa)). Position 34–41 (34–41 (GHSGSGKT)) interacts with ATP. In terms of domain architecture, Mop spans 294–359 (QSSILNCVSA…AQIKAVALLA (66 aa)).

It belongs to the ABC transporter superfamily. Molybdate importer (TC 3.A.1.8) family. In terms of assembly, the complex is composed of two ATP-binding proteins (ModC), two transmembrane proteins (ModB) and a solute-binding protein (ModA).

It localises to the cell inner membrane. The enzyme catalyses molybdate(out) + ATP + H2O = molybdate(in) + ADP + phosphate + H(+). Part of the ABC transporter complex ModABC involved in molybdenum import. Responsible for energy coupling to the transport system. This is Molybdenum import ATP-binding protein ModC from Dechloromonas aromatica (strain RCB).